Here is a 141-residue protein sequence, read N- to C-terminus: Large ribosomal subunit protein uL11 (141 aa).

It belongs to the universal ribosomal protein uL11 family. In terms of assembly, part of the ribosomal stalk of the 50S ribosomal subunit. Interacts with L10 and the large rRNA to form the base of the stalk. L10 forms an elongated spine to which L12 dimers bind in a sequential fashion forming a multimeric L10(L12)X complex. One or more lysine residues are methylated.

In terms of biological role, forms part of the ribosomal stalk which helps the ribosome interact with GTP-bound translation factors. This Lactobacillus acidophilus (strain ATCC 700396 / NCK56 / N2 / NCFM) protein is Large ribosomal subunit protein uL11.